A 473-amino-acid polypeptide reads, in one-letter code: MFS transporter prlG (473 aa).

Over residues 1–12 (MSSTDAEAKNEE) the composition is skewed to basic and acidic residues. The tract at residues 1-27 (MSSTDAEAKNEEAVDWEGPDDPENPRN) is disordered. The span at 13 to 22 (AVDWEGPDDP) shows a compositional bias: acidic residues. The next 11 membrane-spanning stretches (helical) occupy residues 37–57 (VLLV…FAPG), 71–91 (IVAS…PFLL), 101–121 (LIIY…CALS), 125–145 (AMFL…MAIG), 163–183 (ALFG…GGFV), 191–211 (WTFW…LVLM), 266–286 (PIVF…YLLF), 305–325 (GLAY…FAVL), 345–365 (LILM…YGWS), 372–392 (WIVP…ILMP), and 409–429 (ALAA…LAGP).

This sequence belongs to the major facilitator superfamily.

The protein localises to the cell membrane. Efflux pump that might be required for efficient secretion of pyrrolocin or other secondary metabolies produced by the pyrrolocin gene cluster. The polypeptide is MFS transporter prlG (Fungal sp. (strain NRRL 50135)).